The sequence spans 226 residues: ATP-dependent dethiobiotin synthetase BioD (226 aa).

ATP is bound at residue 12 to 17; that stretch reads GIGKTV. Thr-16 provides a ligand contact to Mg(2+). Lys-37 is an active-site residue. Thr-41 is a substrate binding site. Residues Asp-49, 108-111, and 197-199 contribute to the ATP site; these read EGAG and PAG. Positions 49 and 108 each coordinate Mg(2+).

This sequence belongs to the dethiobiotin synthetase family. In terms of assembly, homodimer. Mg(2+) is required as a cofactor.

Its subcellular location is the cytoplasm. It catalyses the reaction (7R,8S)-7,8-diammoniononanoate + CO2 + ATP = (4R,5S)-dethiobiotin + ADP + phosphate + 3 H(+). The protein operates within cofactor biosynthesis; biotin biosynthesis; biotin from 7,8-diaminononanoate: step 1/2. Catalyzes a mechanistically unusual reaction, the ATP-dependent insertion of CO2 between the N7 and N8 nitrogen atoms of 7,8-diaminopelargonic acid (DAPA, also called 7,8-diammoniononanoate) to form a ureido ring. The chain is ATP-dependent dethiobiotin synthetase BioD from Mycolicibacterium vanbaalenii (strain DSM 7251 / JCM 13017 / BCRC 16820 / KCTC 9966 / NRRL B-24157 / PYR-1) (Mycobacterium vanbaalenii).